The chain runs to 729 residues: 1,4-alpha-glucan branching enzyme GlgB (729 aa).

Asp-409 acts as the Nucleophile in catalysis. Catalysis depends on Glu-462, which acts as the Proton donor.

This sequence belongs to the glycosyl hydrolase 13 family. GlgB subfamily. As to quaternary structure, monomer.

The enzyme catalyses Transfers a segment of a (1-&gt;4)-alpha-D-glucan chain to a primary hydroxy group in a similar glucan chain.. It participates in glycan biosynthesis; glycogen biosynthesis. In terms of biological role, catalyzes the formation of the alpha-1,6-glucosidic linkages in glycogen by scission of a 1,4-alpha-linked oligosaccharide from growing alpha-1,4-glucan chains and the subsequent attachment of the oligosaccharide to the alpha-1,6 position. The polypeptide is 1,4-alpha-glucan branching enzyme GlgB (Saccharophagus degradans (strain 2-40 / ATCC 43961 / DSM 17024)).